A 36-amino-acid chain; its full sequence is Gloverin (36 aa).

It is found in the secreted. Antibacterial protein. The sequence is that of Gloverin from Heliothis virescens (Tobacco budworm moth).